Consider the following 614-residue polypeptide: Cathepsin F (614 aa).

An N-terminal signal peptide occupies residues 1 to 20; that stretch reads MRLFAAATVALVLLLGQAAG. Residues 21-393 constitute a propeptide, activation peptide; it reads EELAEERAGQ…AAVVPAYHGE (373 aa). Positions 25-50 are disordered; it reads EERAGQAQGDAESTESSETTTDQAVS. Over residues 29-45 the composition is skewed to low complexity; it reads GQAQGDAESTESSETTT. Asparagine 151 is a glycosylation site (N-linked (GlcNAc...) asparagine). 2 cysteine pairs are disulfide-bonded: cysteine 415–cysteine 456 and cysteine 449–cysteine 489. Cysteine 418 is an active-site residue. N-linked (GlcNAc...) asparagine glycans are attached at residues asparagine 492 and asparagine 510. Cysteine 548 and cysteine 602 are joined by a disulfide. Active-site residues include histidine 555 and asparagine 581.

The protein belongs to the peptidase C1 family.

It catalyses the reaction The recombinant enzyme cleaves synthetic substrates with Phe and Leu (better than Val) in P2, with high specificity constant (kcat/Km) comparable to that of cathepsin L.. Functionally, may have a role in autophagic cell death. This Drosophila melanogaster (Fruit fly) protein is Cathepsin F.